A 58-amino-acid polypeptide reads, in one-letter code: Large ribosomal subunit protein uL30 (58 aa).

It belongs to the universal ribosomal protein uL30 family. Part of the 50S ribosomal subunit.

The sequence is that of Large ribosomal subunit protein uL30 from Zymomonas mobilis subsp. mobilis (strain ATCC 31821 / ZM4 / CP4).